We begin with the raw amino-acid sequence, 444 residues long: Ribulose bisphosphate carboxylase large chain (444 aa).

K5 carries the N6,N6,N6-trimethyllysine modification. Substrate contacts are provided by N114 and T164. K166 functions as the Proton acceptor in the catalytic mechanism. K168 contributes to the substrate binding site. Mg(2+) contacts are provided by K192, D194, and E195. An N6-carboxylysine modification is found at K192. H285 acts as the Proton acceptor in catalysis. Positions 286, 318, and 370 each coordinate substrate.

The protein belongs to the RuBisCO large chain family. Type I subfamily. Heterohexadecamer of 8 large chains and 8 small chains; disulfide-linked. The disulfide link is formed within the large subunit homodimers. Requires Mg(2+) as cofactor. In terms of processing, the disulfide bond which can form in the large chain dimeric partners within the hexadecamer appears to be associated with oxidative stress and protein turnover.

Its subcellular location is the plastid. The protein localises to the chloroplast. The catalysed reaction is 2 (2R)-3-phosphoglycerate + 2 H(+) = D-ribulose 1,5-bisphosphate + CO2 + H2O. It carries out the reaction D-ribulose 1,5-bisphosphate + O2 = 2-phosphoglycolate + (2R)-3-phosphoglycerate + 2 H(+). In terms of biological role, ruBisCO catalyzes two reactions: the carboxylation of D-ribulose 1,5-bisphosphate, the primary event in carbon dioxide fixation, as well as the oxidative fragmentation of the pentose substrate in the photorespiration process. Both reactions occur simultaneously and in competition at the same active site. This chain is Ribulose bisphosphate carboxylase large chain, found in Botrychium strictum (Fern).